The primary structure comprises 391 residues: 8-amino-7-oxononanoate synthase (391 aa).

Arg24 contributes to the substrate binding site. 112-113 (GY) contacts pyridoxal 5'-phosphate. His137 contacts substrate. Pyridoxal 5'-phosphate-binding residues include Ser183, His211, and Thr240. Lys243 carries the post-translational modification N6-(pyridoxal phosphate)lysine. Thr357 provides a ligand contact to substrate.

The protein belongs to the class-II pyridoxal-phosphate-dependent aminotransferase family. BioF subfamily. As to quaternary structure, homodimer. It depends on pyridoxal 5'-phosphate as a cofactor.

The catalysed reaction is 6-carboxyhexanoyl-[ACP] + L-alanine + H(+) = (8S)-8-amino-7-oxononanoate + holo-[ACP] + CO2. Its pathway is cofactor biosynthesis; biotin biosynthesis. Functionally, catalyzes the decarboxylative condensation of pimeloyl-[acyl-carrier protein] and L-alanine to produce 8-amino-7-oxononanoate (AON), [acyl-carrier protein], and carbon dioxide. The chain is 8-amino-7-oxononanoate synthase from Alkalilimnicola ehrlichii (strain ATCC BAA-1101 / DSM 17681 / MLHE-1).